The chain runs to 33 residues: Mu-theraphotoxin-Os1a (33 aa).

Intrachain disulfides connect Cys-2/Cys-17, Cys-9/Cys-22, and Cys-16/Cys-29. Leu-33 carries the post-translational modification Leucine amide.

It belongs to the neurotoxin 10 (Hwtx-1) family. 14 (Hntx-1) subfamily. In terms of assembly, monomer. As to expression, expressed by the venom gland.

The protein localises to the secreted. In terms of biological role, potently and reversibly inhibits some human voltage-gated sodium channels (Nav1.1/SCN1A (IC(50)=72.0 nM), Nav1.2/SCN2A (IC(50)=75.5 nM), Nav1.6/SCN8A (IC(50)=115.0 nM), Nav1.7/SCN9A (IC(50)=52.7-129.5 nM), Nav1.3/SCN3A (IC(50)=306.6 nM)). The hNav1.7/SCN9A channel inhibition occurs without any change in steady-state inactivation- and conductance-voltage relationships. On adult mouse DRG neurons, this toxin is approximately 1000-fold more efficient to inhibit tetrodotoxin (TTX)-sensitive than TTX-resistant sodium currents. In vivo, this toxin exhibits analgesic effects in mice pain models. The sequence is that of Mu-theraphotoxin-Os1a from Omothymus schioedtei (Malaysian earth tiger tarantula).